Reading from the N-terminus, the 317-residue chain is MPALGSPRRLLGSLNCTPPATLPLTLAPNRTGPQCLEVSIPDGLFLSLGLVSLVENVLVVAAIAKNRNLHSPMYYFICCLAMSDLLVSVSNVLETAVMLLLEAGVLATRAAVVQQLDNVIDVLICSSMVSSLCFLGAIAVDRYISIFYALRYHSVVTLPRAWRIIAAIWVASILTSVLSITYYNHTVVLLCLVGFFIAMLALMAVLYVHMLARACQHARGIARLQKRQRPIHQGFGLKGAATLTILLGVFFLCWGPFFLHLSLIVLCPQHPTCGCIFKNFNLFLALIICNAIVDPLIYAFRSQELRKTLQEVLQCSW.

The Extracellular segment spans residues 1 to 37 (MPALGSPRRLLGSLNCTPPATLPLTLAPNRTGPQCLE). Residue Asn-29 is glycosylated (N-linked (GlcNAc...) asparagine). Residues 38 to 63 (VSIPDGLFLSLGLVSLVENVLVVAAI) form a helical membrane-spanning segment. Residues 64-72 (AKNRNLHSP) lie on the Cytoplasmic side of the membrane. A helical membrane pass occupies residues 73–93 (MYYFICCLAMSDLLVSVSNVL). The Extracellular segment spans residues 94–118 (ETAVMLLLEAGVLATRAAVVQQLDN). Residues 119–140 (VIDVLICSSMVSSLCFLGAIAV) traverse the membrane as a helical segment. At 141 to 163 (DRYISIFYALRYHSVVTLPRAWR) the chain is on the cytoplasmic side. Residues 164-183 (IIAAIWVASILTSVLSITYY) traverse the membrane as a helical segment. Topologically, residues 184–191 (NHTVVLLC) are extracellular. A helical transmembrane segment spans residues 192 to 211 (LVGFFIAMLALMAVLYVHML). Residues 212–240 (ARACQHARGIARLQKRQRPIHQGFGLKGA) lie on the Cytoplasmic side of the membrane. The chain crosses the membrane as a helical span at residues 241–266 (ATLTILLGVFFLCWGPFFLHLSLIVL). The Extracellular portion of the chain corresponds to 267 to 279 (CPQHPTCGCIFKN). The helical transmembrane segment at 280–300 (FNLFLALIICNAIVDPLIYAF) threads the bilayer. At 301-317 (RSQELRKTLQEVLQCSW) the chain is on the cytoplasmic side. Residue Cys-315 is the site of S-palmitoyl cysteine attachment.

It belongs to the G-protein coupled receptor 1 family. In terms of assembly, interacts with MGRN1, but does not undergo MGRN1-mediated ubiquitination; this interaction competes with GNAS-binding and thus inhibits agonist-induced cAMP production. Interacts with OPN3; the interaction results in a decrease in MC1R-mediated cAMP signaling and ultimately a decrease in melanin production in melanocytes.

The protein localises to the cell membrane. Functionally, receptor for MSH (alpha, beta and gamma) and ACTH. The activity of this receptor is mediated by G proteins which activate adenylate cyclase. Mediates melanogenesis, the production of eumelanin (black/brown) and phaeomelanin (red/yellow), via regulation of cAMP signaling in melanocytes. The protein is Melanocyte-stimulating hormone receptor (MC1R) of Capra hircus (Goat).